The following is a 136-amino-acid chain: MIKLAILLLFTVAIVRCQGPFGPGCEEAGCPEGSACNIITDRCTCSGVRCRMHCPHGFQRSRYGCEFCKCRLEPMKATCDISECPEGMMCSRLTNKCDCKIDINCRKTCPNGLKRDKLGCEYCECRPKRKLIPRLS.

Positions 1–17 (MIKLAILLLFTVAIVRC) are cleaved as a signal peptide. The residue at position 18 (Gln18) is a Pyrrolidone carboxylic acid. Cystine bridges form between Cys25-Cys36, Cys30-Cys43, Cys45-Cys65, Cys50-Cys68, Cys54-Cys70, Cys79-Cys90, Cys84-Cys97, Cys99-Cys120, Cys105-Cys123, and Cys109-Cys125. Residues 45–70 (CSGVRCRMHCPHGFQRSRYGCEFCKC) form the Antistasin-like 1 domain. The Antistasin-like 2 domain occupies 100–125 (KIDINCRKTCPNGLKRDKLGCEYCEC). Residues 114 to 117 (KRDK) and 128 to 135 (KRKLIPRL) contribute to the heparin site.

This sequence belongs to the protease inhibitor I15 (antistasin) family.

It localises to the secreted. This highly disulfide-bonded protein is a potent inhibitor of factor Xa. May have therapeutic utility as an anticoagulant. Also exhibits a strong metastatic activity. This Haementeria officinalis (Mexican leech) protein is Antistasin.